Consider the following 200-residue polypeptide: Transcription elongation factor A protein-like 3 (200 aa).

The segment covering 1–19 (MEEVRGENEGKLEKEGKPE) has biased composition (basic and acidic residues). The interval 1 to 200 (MEEVRGENEG…QRGLHDIPYL (200 aa)) is disordered. A compositionally biased stretch (acidic residues) spans 20-34 (DEVEPEDEEKSDEDE). Position 30 is a phosphoserine (S30). 3 stretches are compositionally biased toward basic and acidic residues: residues 47–85 (GKPE…KPDS), 94–106 (RAAE…DYVP), and 114–153 (DRGT…EELR).

The protein belongs to the TFS-II family. TFA subfamily.

It is found in the nucleus. Its function is as follows. May be involved in transcriptional regulation. This Mus musculus (Mouse) protein is Transcription elongation factor A protein-like 3 (Tceal3).